We begin with the raw amino-acid sequence, 317 residues long: ATP synthase gamma chain (317 aa).

It belongs to the ATPase gamma chain family. In terms of assembly, F-type ATPases have 2 components, CF(1) - the catalytic core - and CF(0) - the membrane proton channel. CF(1) has five subunits: alpha(3), beta(3), gamma(1), delta(1), epsilon(1). CF(0) has three main subunits: a, b and c.

Its subcellular location is the cellular thylakoid membrane. Produces ATP from ADP in the presence of a proton gradient across the membrane. The gamma chain is believed to be important in regulating ATPase activity and the flow of protons through the CF(0) complex. This chain is ATP synthase gamma chain, found in Synechococcus sp. (strain CC9311).